The primary structure comprises 343 residues: General stress protein 30 (343 aa).

It belongs to the polysaccharide pyruvyl transferase family.

The chain is General stress protein 30 (yxaB) from Bacillus subtilis (strain 168).